The sequence spans 217 residues: DNA repair protein homolog YobH (217 aa).

Residues 1-68 enclose the UmuC domain; it reads MAKAIQSSMW…RPLSKMWGIG (68 aa).

The protein belongs to the DNA polymerase type-Y family.

The protein is DNA repair protein homolog YobH (yobH) of Bacillus subtilis (strain 168).